Consider the following 547-residue polypeptide: Aspartate 1-decarboxylase (547 aa).

Residue K338 is modified to N6-(pyridoxal phosphate)lysine.

It belongs to the group II decarboxylase family. Pyridoxal 5'-phosphate is required as a cofactor.

The enzyme catalyses L-aspartate + H(+) = beta-alanine + CO2. The protein operates within cofactor biosynthesis; (R)-pantothenate biosynthesis; beta-alanine from L-aspartate: step 1/1. Catalyzes the pyridoxal-dependent decarboxylation of aspartate to produce beta-alanine. Has weak activity with glutamate. The protein is Aspartate 1-decarboxylase of Aliivibrio fischeri (strain ATCC 700601 / ES114) (Vibrio fischeri).